The following is a 397-amino-acid chain: Phosphoglycerate kinase (397 aa).

Substrate-binding positions include 22-24 (DLN), arginine 37, 60-63 (HFGR), arginine 119, and arginine 152. ATP is bound by residues lysine 202, glutamate 324, and 354-357 (GGDT).

Belongs to the phosphoglycerate kinase family. As to quaternary structure, monomer.

The protein localises to the cytoplasm. The enzyme catalyses (2R)-3-phosphoglycerate + ATP = (2R)-3-phospho-glyceroyl phosphate + ADP. Its pathway is carbohydrate degradation; glycolysis; pyruvate from D-glyceraldehyde 3-phosphate: step 2/5. The chain is Phosphoglycerate kinase from Rhizorhabdus wittichii (strain DSM 6014 / CCUG 31198 / JCM 15750 / NBRC 105917 / EY 4224 / RW1) (Sphingomonas wittichii).